The chain runs to 564 residues: Histone acetyltransferase rtt109 (564 aa).

Acetyl-CoA contacts are provided by residues Phe138, 157–159, and Trp167; that span reads HVL. Residue Asp261 is the Proton donor/acceptor of the active site. Position 263 is an N6-acetyllysine; by autocatalysis (Lys263). Disordered regions lie at residues 355–420 and 506–549; these read YDKV…NAFY and RKKD…ESPG. Low complexity predominate over residues 366–377; that stretch reads AVSVSTDSQSSD. Composition is skewed to polar residues over residues 394-417 and 512-521; these read DPST…TDQN and SQATTATSAQ. Residues 529-544 show a composition bias toward low complexity; sequence GTVSTAVTAEASTTGT.

The protein belongs to the RTT109 family.

The protein localises to the nucleus. The protein resides in the vacuole. It catalyses the reaction L-lysyl-[protein] + acetyl-CoA = N(6)-acetyl-L-lysyl-[protein] + CoA + H(+). The catalysed reaction is L-lysyl-[histone] + acetyl-CoA = N(6)-acetyl-L-lysyl-[histone] + CoA + H(+). Its function is as follows. Histone chaperone-dependent acetylase that modifies 'Lys-56' of histone H3 (H3K56ac). Histone H3 'Lys-56' acetylation may be required for S-phase-linked DNA damage tolerance. Also acetylates 'Lys-9' of histone H3 (H3K9ac). Autoacetylates. The protein is Histone acetyltransferase rtt109 of Aspergillus flavus.